Reading from the N-terminus, the 365-residue chain is Terpene cyclase 4 (365 aa).

Residues 1–11 (MVPSLITPPPS) show a composition bias toward pro residues. Residues 1–20 (MVPSLITPPPSRSGEATPQK) form a disordered region. Residues Asp118, Asn260, and Ser264 each coordinate Mg(2+). Positions 118-122 (DDPFD) match the D(D/E)XX(D/E) motif motif. The NSE motif signature appears at 260–268 (NDLCSYRKD). The WxxxxxRY motif signature appears at 341–348 (WSLYTFRY). Residues Arg347 and Tyr348 each contribute to the (2E,6E)-farnesyl diphosphate site.

This sequence belongs to the terpene synthase family. Homodimer. Mg(2+) serves as cofactor.

The enzyme catalyses (2E,6E)-farnesyl diphosphate + H2O = koraiol + diphosphate. It participates in sesquiterpene biosynthesis. Terpene cyclase that catalyzes the cyclization of farnesyl diphosphate (FPP) to the sesquiterpene koraiol. The sequence is that of Terpene cyclase 4 from Gibberella fujikuroi (strain CBS 195.34 / IMI 58289 / NRRL A-6831) (Bakanae and foot rot disease fungus).